Here is an 87-residue protein sequence, read N- to C-terminus: UPF0250 protein NT01EI_2946 (87 aa).

This sequence belongs to the UPF0250 family.

The chain is UPF0250 protein NT01EI_2946 from Edwardsiella ictaluri (strain 93-146).